The following is a 393-amino-acid chain: Protein TsgA (393 aa).

The Cytoplasmic portion of the chain corresponds to 1-10 (MTNSNRIKLT). Residues 11 to 31 (WISFLSYALTGALVIVTGMVM) form a helical membrane-spanning segment. Residues 32–50 (GNIADYFHLPVSSMSNTFT) lie on the Periplasmic side of the membrane. The chain crosses the membrane as a helical span at residues 51 to 71 (FLNAGILISIFLNAWLMEIIP). At 72–77 (LKTQLR) the chain is on the cytoplasmic side. A helical transmembrane segment spans residues 78 to 98 (FGFILMVLAVAGLMFGHSLAL). Over 99–100 (FS) the chain is Periplasmic. The chain crosses the membrane as a helical span at residues 101 to 121 (AAMFVLGLVSGITMSIGTFLI). The Cytoplasmic segment spans residues 122 to 133 (TQLYEGRQRGSR). Residues 134 to 154 (LLFTDSFFSMAGMIFPMVAAF) form a helical membrane-spanning segment. Residues 155 to 161 (LLARSIE) are Periplasmic-facing. The helical transmembrane segment at 162-182 (WYWVYACIGLVYLAIFILTFG) threads the bilayer. Over 183-205 (CEFPALGKHAQHSQAPVVKEKWG) the chain is Cytoplasmic. A helical membrane pass occupies residues 206–226 (IGVLFLAVAALCYILGQLGFI). At 227–244 (SWVPEYAKGLGMSLNDAG) the chain is on the periplasmic side. A helical membrane pass occupies residues 245–265 (ALVSDFWMSYMFGMWAFSFIL). Topologically, residues 266–272 (RFFDLQR) are cytoplasmic. The chain crosses the membrane as a helical span at residues 273-293 (ILTVLAGMAAVLMYLFITGTQ). The Periplasmic segment spans residues 294–297 (AHMP). The chain crosses the membrane as a helical span at residues 298-318 (WFILTLGFFSSAIYTSIITLG). At 319 to 331 (SQQTKVASPKLVN) the chain is on the cytoplasmic side. Residues 332–352 (FILTCGTIGTMLTFVVTGPIV) traverse the membrane as a helical segment. Topologically, residues 353-360 (AHSGPQAA) are periplasmic. Residues 361-381 (LLTANGLYAVVFVMCFALGFV) form a helical membrane-spanning segment. Over 382 to 393 (SRHRQHSAPATH) the chain is Cytoplasmic.

Belongs to the major facilitator superfamily. TsgA family.

Its subcellular location is the cell inner membrane. The protein is Protein TsgA of Salmonella choleraesuis (strain SC-B67).